The primary structure comprises 515 residues: Galactose/methyl galactoside import ATP-binding protein MglA (515 aa).

ABC transporter domains follow at residues 8-243 and 254-499; these read LEMR…VGRE and IPKE…AKYL. 40 to 47 is an ATP binding site; sequence GENGAGKS.

It belongs to the ABC transporter superfamily. Galactose/methyl galactoside importer (TC 3.A.1.2.3) family. In terms of assembly, the complex is composed of one ATP-binding protein (MglA), two transmembrane proteins (MglC) and a solute-binding protein (MglB).

It is found in the cell membrane. The catalysed reaction is D-galactose(out) + ATP + H2O = D-galactose(in) + ADP + phosphate + H(+). It carries out the reaction methyl beta-D-galactoside(out) + ATP + H2O = methyl beta-D-galactoside(in) + ADP + phosphate + H(+). Functionally, part of the ABC transporter complex MglABC involved in galactose/methyl galactoside import. Responsible for energy coupling to the transport system. This is Galactose/methyl galactoside import ATP-binding protein MglA from Clostridium perfringens (strain SM101 / Type A).